The primary structure comprises 325 residues: NADH-quinone oxidoreductase subunit H (325 aa).

8 consecutive transmembrane segments (helical) span residues 8 to 28, 81 to 101, 114 to 134, 159 to 179, 186 to 206, 237 to 257, 265 to 285, and 304 to 324; these read VIDILLTVVKAVVILLVVVTC, GIFTLAPVIAFTSLLITFAIV, IGVLFFLMMAGLAVYAVLFAG, FLGLSLMGVVAQAGSFNLGAI, LWNVVPQFFGFVTFALAGVAV, FFVGEYVGIVTISALMVTLFF, LPPFIWFSIKTAFFMMMFILI, and ICLPLTLLNLLATAAVILYNA.

It belongs to the complex I subunit 1 family. NDH-1 is composed of 13 different subunits. Subunits NuoA, H, J, K, L, M, N constitute the membrane sector of the complex.

The protein localises to the cell inner membrane. The enzyme catalyses a quinone + NADH + 5 H(+)(in) = a quinol + NAD(+) + 4 H(+)(out). Functionally, NDH-1 shuttles electrons from NADH, via FMN and iron-sulfur (Fe-S) centers, to quinones in the respiratory chain. The immediate electron acceptor for the enzyme in this species is believed to be ubiquinone. Couples the redox reaction to proton translocation (for every two electrons transferred, four hydrogen ions are translocated across the cytoplasmic membrane), and thus conserves the redox energy in a proton gradient. This subunit may bind ubiquinone. This Sodalis glossinidius (strain morsitans) protein is NADH-quinone oxidoreductase subunit H.